Reading from the N-terminus, the 244-residue chain is 3-oxoacyl-[acyl-carrier-protein] reductase FabG (244 aa).

NADP(+)-binding positions include 12–15 and T37; that span reads GASR. G50 and G53 together coordinate Ca(2+). NADP(+) contacts are provided by residues 59–60 and N86; that span reads NV. S138 lines the substrate pocket. Ca(2+) is bound at residue N145. Y151 acts as the Proton acceptor in catalysis. NADP(+)-binding positions include 151–155 and I184; that span reads YAAAK. E233 and T234 together coordinate Ca(2+).

Belongs to the short-chain dehydrogenases/reductases (SDR) family. As to quaternary structure, homotetramer.

It catalyses the reaction a (3R)-hydroxyacyl-[ACP] + NADP(+) = a 3-oxoacyl-[ACP] + NADPH + H(+). The catalysed reaction is 3-oxobutanoyl-[ACP] + NADPH + H(+) = (3R)-hydroxybutanoyl-[ACP] + NADP(+). It carries out the reaction 3-oxopentanoyl-[ACP] + NADPH + H(+) = (3R)-hydroxypentanoyl-[ACP] + NADP(+). The enzyme catalyses 3-oxohexanoyl-[ACP] + NADPH + H(+) = (3R)-hydroxyhexanoyl-[ACP] + NADP(+). It catalyses the reaction 3-oxoheptanoyl-[ACP] + NADPH + H(+) = (3R)-hydroxyheptanoyl-[ACP] + NADP(+). The catalysed reaction is 3-oxooctanoyl-[ACP] + NADPH + H(+) = (3R)-hydroxyoctanoyl-[ACP] + NADP(+). It carries out the reaction 3-oxononanoyl-[ACP] + NADPH + H(+) = (3R)-hydroxynonanoyl-[ACP] + NADP(+). The enzyme catalyses 3-oxodecanoyl-[ACP] + NADPH + H(+) = (3R)-hydroxydecanoyl-[ACP] + NADP(+). It catalyses the reaction 3-oxohexadecanoyl-[ACP] + NADPH + H(+) = (3R)-hydroxyhexadecanoyl-[ACP] + NADP(+). The catalysed reaction is 3-oxo-(9Z)-hexadecenoyl-[ACP] + NADPH + H(+) = (3R)-hydroxy-(9Z)-hexadecenoyl-[ACP] + NADP(+). It carries out the reaction 4-methyl-3-oxopentanoyl-[ACP] + NADPH + H(+) = (3R)-hydroxy-4-methylpentanoyl-[ACP] + NADP(+). The enzyme catalyses 5-methyl-3-oxohexanoyl-[ACP] + NADPH + H(+) = (3R)-hydroxy-5-methylhexanoyl-[ACP] + NADP(+). It catalyses the reaction 4-methyl-3-oxohexanoyl-[ACP] + NADPH + H(+) = (3R)-hydroxy-4-methylhexanoyl-[ACP] + NADP(+). It participates in lipid metabolism; fatty acid biosynthesis. With respect to regulation, inhibited by cinnamic acid derivatives. Catalyzes the NADPH-dependent reduction of beta-ketoacyl-ACP substrates to beta-hydroxyacyl-ACP products, the first reductive step in the elongation cycle of fatty acid biosynthesis. The chain is 3-oxoacyl-[acyl-carrier-protein] reductase FabG (fabG) from Escherichia coli (strain K12).